The sequence spans 444 residues: Flagellum-specific ATP synthase (444 aa).

164–171 lines the ATP pocket; sequence AGSGVGKS.

The protein belongs to the ATPase alpha/beta chains family.

Its subcellular location is the cytoplasm. It catalyses the reaction ATP + H2O + 4 H(+)(in) = ADP + phosphate + 5 H(+)(out). Functionally, probable catalytic subunit of a protein translocase for flagellum-specific export, or a proton translocase involved in local circuits at the flagellum. The chain is Flagellum-specific ATP synthase (fliI) from Caulobacter vibrioides (strain ATCC 19089 / CIP 103742 / CB 15) (Caulobacter crescentus).